The sequence spans 66 residues: Large ribosomal subunit protein bL35 (66 aa).

2 stretches are compositionally biased toward basic residues: residues 1–16 (MPKQ…RVKR) and 23–45 (KRGR…RQLR). Residues 1–53 (MPKQKTHRGLAKRVKRTGGGGLKRGRAFTSHRFHGKTKKQRRQLRKASMVAKG) are disordered.

Belongs to the bacterial ribosomal protein bL35 family.

The polypeptide is Large ribosomal subunit protein bL35 (Enterococcus faecalis (strain ATCC 700802 / V583)).